A 532-amino-acid polypeptide reads, in one-letter code: Fatty-acid amide hydrolase 2-A (532 aa).

Residues 9–29 (FLGRLLRAVVWILFAAFKLFA) form a helical membrane-spanning segment. Catalysis depends on charge relay system residues Lys-129 and Ser-204. Catalysis depends on Ser-228, which acts as the Acyl-ester intermediate.

The protein belongs to the amidase family.

Its subcellular location is the membrane. The catalysed reaction is N-(5Z,8Z,11Z,14Z-eicosatetraenoyl)-ethanolamine + H2O = ethanolamine + (5Z,8Z,11Z,14Z)-eicosatetraenoate. It carries out the reaction (9Z)-octadecenamide + H2O = (9Z)-octadecenoate + NH4(+). The protein is Fatty-acid amide hydrolase 2-A (faah2a) of Danio rerio (Zebrafish).